The sequence spans 299 residues: uncharacterized protein (299 aa).

Residues T47 and Y109 each act as charge relay system in the active site. Residue Y138 is the Proton donor of the active site. K168 functions as the Schiff-base intermediate with substrate in the catalytic mechanism.

It belongs to the DapA family. Homotetramer.

The protein localises to the cytoplasm. This is an uncharacterized protein from Chloroflexus aurantiacus (strain ATCC 29366 / DSM 635 / J-10-fl).